The chain runs to 389 residues: DNA damage checkpoint control protein RAD17 (389 aa).

The disordered stretch occupies residues 358–389 (LAPPSAFPAEETQDPDESYHPAPSNTDIPLFL). Positions 380-389 (PSNTDIPLFL) are enriched in polar residues.

Belongs to the rad1 family. In terms of assembly, component of the checkpoint clamp complex composed of DDC1, MEC3 and RAD17.

Its subcellular location is the nucleus. Component of the checkpoint clamp complex involved in the surveillance mechanism that allows the DNA repair pathways to act to restore the integrity of the DNA prior to DNA synthesis or separation of the replicated chromosomes. This chain is DNA damage checkpoint control protein RAD17 (RAD17), found in Eremothecium gossypii (strain ATCC 10895 / CBS 109.51 / FGSC 9923 / NRRL Y-1056) (Yeast).